A 234-amino-acid chain; its full sequence is CHD1 helical C-terminal domain containing protein 1 (234 aa).

The tract at residues 1 to 38 (MEASDGQADEREEPLEQGTNARSLERRSSTTPAKDSLV) is disordered. The interval 44 to 145 (LDRDTFKICK…NNQTTKFLMA (102 aa)) is CHD1 helical C-terminal domain (CHCT). The interval 200–234 (LRARGPRRRGSKLPQEPKLKRRRIKEAPDTPETCL) is disordered.

It localises to the cytoplasm. The protein localises to the nucleus. May play a role in regulation of apoptosis. The chain is CHD1 helical C-terminal domain containing protein 1 (CHCT1) from Bos taurus (Bovine).